Reading from the N-terminus, the 318-residue chain is Porphobilinogen deaminase (318 aa).

C245 is subject to S-(dipyrrolylmethanemethyl)cysteine.

Belongs to the HMBS family. As to quaternary structure, monomer. It depends on dipyrromethane as a cofactor.

The enzyme catalyses 4 porphobilinogen + H2O = hydroxymethylbilane + 4 NH4(+). Its pathway is porphyrin-containing compound metabolism; protoporphyrin-IX biosynthesis; coproporphyrinogen-III from 5-aminolevulinate: step 2/4. It participates in porphyrin-containing compound metabolism; chlorophyll biosynthesis. Functionally, tetrapolymerization of the monopyrrole PBG into the hydroxymethylbilane pre-uroporphyrinogen in several discrete steps. This chain is Porphobilinogen deaminase, found in Prochlorococcus marinus (strain MIT 9215).